Reading from the N-terminus, the 124-residue chain is Small ribosomal subunit protein bS6 (124 aa).

This sequence belongs to the bacterial ribosomal protein bS6 family.

Binds together with bS18 to 16S ribosomal RNA. This chain is Small ribosomal subunit protein bS6, found in Actinobacillus pleuropneumoniae serotype 7 (strain AP76).